A 273-amino-acid polypeptide reads, in one-letter code: Putative phosphoenolpyruvate synthase regulatory protein (273 aa).

154-161 (GVSRSGKT) is a binding site for ADP.

The protein belongs to the pyruvate, phosphate/water dikinase regulatory protein family. PSRP subfamily.

The enzyme catalyses [pyruvate, water dikinase] + ADP = [pyruvate, water dikinase]-phosphate + AMP + H(+). The catalysed reaction is [pyruvate, water dikinase]-phosphate + phosphate + H(+) = [pyruvate, water dikinase] + diphosphate. Functionally, bifunctional serine/threonine kinase and phosphorylase involved in the regulation of the phosphoenolpyruvate synthase (PEPS) by catalyzing its phosphorylation/dephosphorylation. This chain is Putative phosphoenolpyruvate synthase regulatory protein, found in Neisseria meningitidis serogroup B (strain ATCC BAA-335 / MC58).